A 283-amino-acid polypeptide reads, in one-letter code: Interferon alpha-inducible protein 27-like protein 2B (283 aa).

The transit peptide at 1–90 (MKRKFVGAAI…AVGTATGARA (90 aa)) directs the protein to the mitochondrion. A disordered region spans residues 90 to 120 (AEGSMGASREQESGPQDPPQELQEPQEPPSC). Transmembrane regions (helical) follow at residues 130-150 (FVGAAIGGALAVAGAPIALSA), 176-196 (GGGIAAGGLVATLQSVGILGL), and 202-222 (IILGAVGAATGATAAGAMGAC). The tract at residues 227 to 283 (PGLQDLQQEPKEPQEPQELQKQQEPQEPQELQKQQETQETQETQELQKTQEPPSYEK) is disordered. Residues 242-283 (PQELQKQQEPQEPQELQKQQETQETQETQELQKTQEPPSYEK) are compositionally biased toward low complexity.

Belongs to the IFI6/IFI27 family. In terms of assembly, homooligomer. Interacts with BAK1. Interacts with BAX. Interacts with adenine nucleotide translocase.

Its subcellular location is the mitochondrion inner membrane. Functions in the intrinsic apoptotic signaling pathway and may have an interferon-induced antiviral activity. The protein is Interferon alpha-inducible protein 27-like protein 2B of Mus musculus (Mouse).